Consider the following 338-residue polypeptide: Fructose-1,6-bisphosphatase 1 (338 aa).

Ala-2 carries the post-translational modification N-acetylalanine. AMP-binding positions include 18 to 22 and 28 to 32; these read VMEEG and TGELT. Asp-69 and Glu-98 together coordinate Mg(2+). An AMP-binding site is contributed by 113–114; sequence KY. Residues Asp-119, Leu-121, and Asp-122 each contribute to the Mg(2+) site. Substrate is bound at residue 122-125; that stretch reads DGSS. Arg-141 is a binding site for AMP. Lys-151 bears the N6-succinyllysine mark. Residues 213-216, 244-249, Tyr-265, and 275-277 each bind substrate; these read NEGY, RYVGSM, and KLR. Phosphotyrosine is present on residues Tyr-216, Tyr-245, and Tyr-265. A Mg(2+)-binding site is contributed by Glu-281.

The protein belongs to the FBPase class 1 family. Homotetramer. Mg(2+) serves as cofactor. In terms of tissue distribution, expressed in pancreatic islets.

It catalyses the reaction beta-D-fructose 1,6-bisphosphate + H2O = beta-D-fructose 6-phosphate + phosphate. The protein operates within carbohydrate biosynthesis; gluconeogenesis. With respect to regulation, subject to complex allosteric regulation. The enzyme can assume an active R-state, or an inactive T-state. Intermediate conformations may exist. AMP acts as an allosteric inhibitor. AMP binding affects the turnover of bound substrate and not the affinity for substrate. Fructose 2,6-bisphosphate acts as a competitive inhibitor. Fructose 2,6-bisphosphate and AMP have synergistic effects. Functionally, catalyzes the hydrolysis of fructose 1,6-bisphosphate to fructose 6-phosphate in the presence of divalent cations, acting as a rate-limiting enzyme in gluconeogenesis. Plays a role in regulating glucose sensing and insulin secretion of pancreatic beta-cells. Appears to modulate glycerol gluconeogenesis in liver. Important regulator of appetite and adiposity; increased expression of the protein in liver after nutrient excess increases circulating satiety hormones and reduces appetite-stimulating neuropeptides and thus seems to provide a feedback mechanism to limit weight gain. The protein is Fructose-1,6-bisphosphatase 1 (FBP1) of Homo sapiens (Human).